Here is a 4043-residue protein sequence, read N- to C-terminus: Hybrid PKS-NRPS synthetase thnA (4043 aa).

In terms of domain architecture, Ketosynthase family 3 (KS3) spans 6–440 (LEPIAIVGSA…GSNAHAILEE (435 aa)). Active-site for beta-ketoacyl synthase activity residues include Cys179, His319, and His360. Residues 558–894 (VFTGQGAQWA…FSDALGFVWT (337 aa)) form a malonyl-CoA:ACP transacylase (MAT) domain region. The N-terminal hotdog fold stretch occupies residues 952-1090 (HEILGTILPE…ATVKIILGTP (139 aa)). The interval 952-1256 (HEILGTILPE…LSIKTFAPAT (305 aa)) is dehydratase (DH) domain. One can recognise a PKS/mFAS DH domain in the interval 952 to 1258 (HEILGTILPE…IKTFAPATQA (307 aa)). His984 (proton acceptor; for dehydratase activity) is an active-site residue. The interval 1105–1258 (LFPIDADRFY…IKTFAPATQA (154 aa)) is C-terminal hotdog fold. The Proton donor; for dehydratase activity role is filled by Asp1166. The interval 1417 to 1591 (LASMMKQITH…RKAGFAGVDA (175 aa)) is methyltransferase (MT) domain. The interval 2146–2320 (TYLLVGLTGK…GSTFDIGQVA (175 aa)) is ketoreductase (KR) domain. In terms of domain architecture, Carrier 1 spans 2434 to 2512 (EQALDILKEC…ELCDRVVDKL (79 aa)). Ser2472 carries the post-translational modification O-(pantetheine 4'-phosphoryl)serine. Residues 2521–2618 (GKQGESQPPA…PPPPEPAVER (98 aa)) form a disordered region. Residues 2527–2536 (QPPASTAQPQ) are compositionally biased toward low complexity. Residues 2537–2547 (PVAPKPKPLPV) are compositionally biased toward pro residues. The span at 2578–2605 (YSATEASTRSGSPSEATRLSQKVSSKLQ) shows a compositional bias: polar residues. A condensation (C) domain region spans residues 2626 to 3067 (IKSVPISLGQ…IPRFSEKQLA (442 aa)). The segment at 3092 to 3496 (QVARENPDKV…GTMVFHSRMA (405 aa)) is adenylation (A) domain. One can recognise a Carrier 2 domain in the interval 3614-3695 (TELTETMIQL…EMAQKVEETI (82 aa)). Ser3655 carries the post-translational modification O-(pantetheine 4'-phosphoryl)serine. A reductase (R) domain region spans residues 3736–3954 (ITGATGFLSK…DMLPAVLTAQ (219 aa)).

In the C-terminal section; belongs to the NRP synthetase family.

The enzyme catalyses malate + 6 malonyl-CoA + acetyl-CoA + 2 AH2 + 2 S-adenosyl-L-methionine + 5 NADPH + 9 H(+) = trihazone A + 2 A + 2 S-adenosyl-L-homocysteine + 6 CO2 + 5 NADP(+) + 7 CoA + 6 H2O. It functions in the pathway secondary metabolite biosynthesis. Functionally, hybrid PKS-NRPS synthetase; part of the gene cluster that produces the tetronate natural products trihazones. The PKS-NRPS synthetase thnA with the help of the trans-enoyl reductase thnE are responsible for the synthesis of the carboxylmethyl containing trihazone A. The PKS portion of thnA synthesizes beta-keto-triene chain from one acetyl-CoA and 6 equivalents of malonyl-CoA, in collaboration with thnE, which selectively reduces the enoyl intermediate during the first and fourth iteration of the PKS. The NRPS domain selects and activates malate, of which the alpha-hydroxyl group attacks the completed polyketide acyl-S-ACP chain to form the ester product. Intramolecular Dieckmann cyclization catalyzed by the terminal reductase domain releases the product as trihazone A from the PKS-NPRS. The pathway begins with the formation of trihazone A by the hybrid PKS-NRPS synthetase thnA and the trans-enoyl reductase thnE. Trihazone A is further decarboxylated by the 2-oxoglutarate-dependent dioxygenase thnC to produce trihazone D. The function of the FAD-dependent monooxygenase thnD has still to be identified. The protein is Hybrid PKS-NRPS synthetase thnA of Trichoderma harzianum (Hypocrea lixii).